Reading from the N-terminus, the 21-residue chain is Cardiotoxin-like basic polypeptide ah (21 aa).

This sequence belongs to the three-finger toxin family. Short-chain subfamily. Orphan group XV sub-subfamily. Post-translationally, contains 4 disulfide bonds. Expressed by the venom gland.

It is found in the secreted. The protein resides in the target cell membrane. Its function is as follows. Has hemolytic activity under low-lecithin conditions. Has low cytotoxic activity. Inhibits the expression of VEGF and bFGF in human non-small-cell lung cancer cell line NCI-H1299 in a dose-dependent manner. This Naja atra (Chinese cobra) protein is Cardiotoxin-like basic polypeptide ah.